We begin with the raw amino-acid sequence, 509 residues long: Maturase K (509 aa).

Belongs to the intron maturase 2 family. MatK subfamily.

The protein localises to the plastid. It localises to the chloroplast. Functionally, usually encoded in the trnK tRNA gene intron. Probably assists in splicing its own and other chloroplast group II introns. In Nicotiana alata (Winged tobacco), this protein is Maturase K.